The following is a 408-amino-acid chain: MIQKPRGTRDMLPDEMERRREIEARMRARARLYGFREIATPVFEELELFTIRSGEGIINEMYVFEDKGGRSLALRPELTAPVLRMYVEEGRSLNKPVKWCYFADCFRYERPQKGRYRQFWQFGAELIGADSAMGDAEVITLGYDLLRTAGVTFVLRIGHLSFMRTLLADLADGDKKKIRAFLDKREEEAAITYLRDIGRDDLCDPLIRLCGARTLEDVFAIIGEIPEAARVREMFAILDASGIPYEINPAIARGLDYYTGVVFECFAEGLGAENQILGGGAYRLAHLFGGEDTPSAGFAIGFDRVMVALGEASWVPWQPQVMIITTNEGRDYALTIAGQFRMNGIITETDLMDRSFSAQMKAAGKSADYAVIIGKDEVETGTITLKDLKAGTQEKITADEAIQKLTSA.

It belongs to the class-II aminoacyl-tRNA synthetase family.

It is found in the cytoplasm. It catalyses the reaction tRNA(His) + L-histidine + ATP = L-histidyl-tRNA(His) + AMP + diphosphate + H(+). The sequence is that of Histidine--tRNA ligase from Methanospirillum hungatei JF-1 (strain ATCC 27890 / DSM 864 / NBRC 100397 / JF-1).